Reading from the N-terminus, the 293-residue chain is Histone H3-like centromeric protein CSE4 (293 aa).

The segment covering 132–141 (QDLSYDESDY) has biased composition (acidic residues). The disordered stretch occupies residues 132-169 (QDLSYDESDYSDPLQEIDSNYRESPRRTTDKILKSSSK). Residues 150-164 (SNYRESPRRTTDKIL) are compositionally biased toward basic and acidic residues. Positions 157 to 291 (RRTTDKILKS…VQLARRIRGQ (135 aa)) are H3-like.

This sequence belongs to the histone H3 family. As to quaternary structure, component of centromeric nucleosomes, where DNA is wrapped around a histone octamer core. The octamer contains two molecules each of H2A, H2B, CSE4/CENPA and H4 assembled in one CSE4-H4 heterotetramer and two H2A-H2B heterodimers. Interacts with the inner kinetochore. Post-translationally, ubiquitinated. Is degraded through ubiquitin-mediated proteolysis when not protected by its association to the kinetochore.

The protein localises to the nucleus. It localises to the chromosome. Its subcellular location is the centromere. Its function is as follows. Histone H3-like nucleosomal protein that is specifically found in centromeric nucleosomes. Replaces conventional H3 in the nucleosome core of centromeric chromatin that serves as an assembly site for the inner kinetochore. Required for recruitment and assembly of kinetochore proteins, mitotic progression and chromosome segregation. May serve as an epigenetic mark that propagates centromere identity through replication and cell division. This chain is Histone H3-like centromeric protein CSE4 (CSE4), found in Monosporozyma servazzii (Yeast).